Consider the following 403-residue polypeptide: Argininosuccinate synthase (403 aa).

ATP-binding positions include 10–18 (AYSGGVDTS) and Ala-38. An L-citrulline-binding site is contributed by Tyr-89. Gly-119 contributes to the ATP binding site. The L-aspartate site is built by Thr-121, Asn-125, and Asp-126. Asn-125 serves as a coordination point for L-citrulline. Arg-129, Ser-177, Ser-186, Glu-262, and Tyr-274 together coordinate L-citrulline.

Belongs to the argininosuccinate synthase family. Type 1 subfamily. As to quaternary structure, homotetramer.

It is found in the cytoplasm. The catalysed reaction is L-citrulline + L-aspartate + ATP = 2-(N(omega)-L-arginino)succinate + AMP + diphosphate + H(+). The protein operates within amino-acid biosynthesis; L-arginine biosynthesis; L-arginine from L-ornithine and carbamoyl phosphate: step 2/3. This chain is Argininosuccinate synthase, found in Synechococcus sp. (strain CC9902).